Reading from the N-terminus, the 342-residue chain is S-adenosylmethionine:tRNA ribosyltransferase-isomerase (342 aa).

Belongs to the QueA family. In terms of assembly, monomer.

It is found in the cytoplasm. The catalysed reaction is 7-aminomethyl-7-carbaguanosine(34) in tRNA + S-adenosyl-L-methionine = epoxyqueuosine(34) in tRNA + adenine + L-methionine + 2 H(+). The protein operates within tRNA modification; tRNA-queuosine biosynthesis. Transfers and isomerizes the ribose moiety from AdoMet to the 7-aminomethyl group of 7-deazaguanine (preQ1-tRNA) to give epoxyqueuosine (oQ-tRNA). The chain is S-adenosylmethionine:tRNA ribosyltransferase-isomerase from Listeria welshimeri serovar 6b (strain ATCC 35897 / DSM 20650 / CCUG 15529 / CIP 8149 / NCTC 11857 / SLCC 5334 / V8).